Consider the following 235-residue polypeptide: Large ribosomal subunit protein uL1 (235 aa).

The protein belongs to the universal ribosomal protein uL1 family. In terms of assembly, part of the 50S ribosomal subunit.

Binds directly to 23S rRNA. The L1 stalk is quite mobile in the ribosome, and is involved in E site tRNA release. Functionally, protein L1 is also a translational repressor protein, it controls the translation of the L11 operon by binding to its mRNA. The polypeptide is Large ribosomal subunit protein uL1 (Prochlorococcus marinus (strain MIT 9312)).